The primary structure comprises 106 residues: Small ribosomal subunit protein bS20 (106 aa).

A disordered region spans residues 1 to 32 (MAQKKPKRNLSALKRHRQSLKRRLRNKAKKSA).

In terms of assembly, part of the 30S ribosomal subunit.

In terms of biological role, one of the primary rRNA binding proteins, it binds directly to 16S rRNA where it nucleates assembly of the bottom of the body of the 30S subunit, by binding to several RNA helices of the 16S rRNA. This Thermus thermophilus (strain ATCC 27634 / DSM 579 / HB8) protein is Small ribosomal subunit protein bS20 (rpsT).